The chain runs to 78 residues: MTEAEIRDKVYDIIVSKMGVNKDQIKPESKFSDDLGADSLDTVELIMELENEFDVQIPDEDAEKIGTVQQAIDYIVKK.

Residues 4 to 78 (AEIRDKVYDI…QQAIDYIVKK (75 aa)) form the Carrier domain. S39 is subject to O-(pantetheine 4'-phosphoryl)serine.

Belongs to the acyl carrier protein (ACP) family. 4'-phosphopantetheine is transferred from CoA to a specific serine of apo-ACP by AcpS. This modification is essential for activity because fatty acids are bound in thioester linkage to the sulfhydryl of the prosthetic group.

The protein localises to the cytoplasm. Its pathway is lipid metabolism; fatty acid biosynthesis. Carrier of the growing fatty acid chain in fatty acid biosynthesis. The polypeptide is Acyl carrier protein (Chlorobium luteolum (strain DSM 273 / BCRC 81028 / 2530) (Pelodictyon luteolum)).